The primary structure comprises 339 residues: uncharacterized protein (339 aa).

2 VOC domains span residues 2 to 127 and 141 to 276; these read EFDY…VRSE and TIDH…CLEI. 3 residues coordinate Fe cation: His-144, His-222, and Glu-306.

This sequence belongs to the 4HPPD family. Requires Fe cation as cofactor.

This is an uncharacterized protein from Synechocystis sp. (strain ATCC 27184 / PCC 6803 / Kazusa).